The following is a 397-amino-acid chain: MHNLVILGASGSIGQSTLKVLRHNPGRWQVLALTAARSVEAMLRDCLEFSPRFAVMVDEAAASELAAQLKTHGSATRVMAGPAALCEVAAHPDAHSVMAAIVGAAGLAPTMAAVRAGKRILLANKEALVMSGAFFMEAVREHGAELLPIDSEHNAIFQCLPEAIQRQPGFCDLAGAGISKILLTGSGGPFRYTDIGELAHVTPAQAIAHPNWSMGAKISVDSATMINKGLEYIEARWLFNAAPEQIQVVIHPQSVIHSMVQYKDGSVLAQLGNPDMCTPIAHALAYPARVESGVEPLDFFSVGEFSFIRPDYERYPCLQLAMHACQQGQAATTALNAANEEAVAAFLAERIGFMDIARVNEATMLALGGTAAGSLDDLIALDGAARARAHNLIEELS.

Serine 10, glycine 11, serine 12, isoleucine 13, alanine 36, arginine 37, and asparagine 124 together coordinate NADPH. Residue lysine 125 participates in 1-deoxy-D-xylulose 5-phosphate binding. Glutamate 126 lines the NADPH pocket. Aspartate 150 provides a ligand contact to Mn(2+). 1-deoxy-D-xylulose 5-phosphate is bound by residues serine 151, glutamate 152, serine 186, and histidine 209. Glutamate 152 provides a ligand contact to Mn(2+). Glycine 215 contacts NADPH. Residues serine 222, asparagine 227, lysine 228, and glutamate 231 each coordinate 1-deoxy-D-xylulose 5-phosphate. A Mn(2+)-binding site is contributed by glutamate 231.

This sequence belongs to the DXR family. It depends on Mg(2+) as a cofactor. The cofactor is Mn(2+).

It carries out the reaction 2-C-methyl-D-erythritol 4-phosphate + NADP(+) = 1-deoxy-D-xylulose 5-phosphate + NADPH + H(+). The protein operates within isoprenoid biosynthesis; isopentenyl diphosphate biosynthesis via DXP pathway; isopentenyl diphosphate from 1-deoxy-D-xylulose 5-phosphate: step 1/6. Functionally, catalyzes the NADPH-dependent rearrangement and reduction of 1-deoxy-D-xylulose-5-phosphate (DXP) to 2-C-methyl-D-erythritol 4-phosphate (MEP). This is 1-deoxy-D-xylulose 5-phosphate reductoisomerase from Aeromonas hydrophila subsp. hydrophila (strain ATCC 7966 / DSM 30187 / BCRC 13018 / CCUG 14551 / JCM 1027 / KCTC 2358 / NCIMB 9240 / NCTC 8049).